A 284-amino-acid chain; its full sequence is NAD kinase (284 aa).

D67 functions as the Proton acceptor in the catalytic mechanism. Residues 67 to 68 (DG), 141 to 142 (ND), R152, K169, D171, 182 to 187 (TGYSLS), and Q241 each bind NAD(+).

This sequence belongs to the NAD kinase family. It depends on a divalent metal cation as a cofactor.

The protein resides in the cytoplasm. The enzyme catalyses NAD(+) + ATP = ADP + NADP(+) + H(+). Functionally, involved in the regulation of the intracellular balance of NAD and NADP, and is a key enzyme in the biosynthesis of NADP. Catalyzes specifically the phosphorylation on 2'-hydroxyl of the adenosine moiety of NAD to yield NADP. The chain is NAD kinase from Geotalea daltonii (strain DSM 22248 / JCM 15807 / FRC-32) (Geobacter daltonii).